Here is a 345-residue protein sequence, read N- to C-terminus: Serine proteinase inhibitor 2 (345 aa).

The protein belongs to the serpin family. Poxviruses subfamily.

The protein resides in the host cytoplasm. Its function is as follows. Viral serpin that inhibits both cysteine and serine proteinases involved in the regulation of host inflammatory and apoptosis processes. Major anti-apoptotic protein which inhibits both intrinsic and extrinsic pathways and strongly cleaves host CASP1 and CASP8 but is a rather poor inhibitor of host CASP3. Prevents the proteolytic activity of host interleukin-1-beta converting enzyme (ICE) and ICE-like enzymes. Can also block apoptosis through host tumor necrosis factor (TNF) receptor. The inhibition of host ICE is an example of a 'cross-class' interaction, in which a serpin inhibits a non-serine proteinase. Also inhibits granzyme B. This chain is Serine proteinase inhibitor 2 (OPG199), found in Vaccinia virus (strain Western Reserve) (VACV).